The chain runs to 1871 residues: Protein RRP5 homolog (1871 aa).

The tract at residues 1-62 (MANLEESFPR…KTKKLKIEKR (62 aa)) is disordered. The residue at position 2 (Ala-2) is an N-acetylalanine. The residue at position 7 (Ser-7) is a Phosphoserine. Over residues 43–59 (KRKKSQKGPAKTKKLKI) the composition is skewed to basic residues. 4 consecutive S1 motif domains span residues 83 to 171 (GMRI…LSLN), 187 to 258 (GMLL…LSVG), 281 to 346 (GLVV…LSLR), and 365 to 436 (GAVL…LSLR). The residue at position 438 (Ser-438) is a Phosphoserine. S1 motif domains follow at residues 453–522 (GAVV…MTLK), 542–611 (GLQT…LSFK), 636–707 (GQLV…LCRK), and 729–798 (GMLL…LSLR). Residues 998–1018 (AAKRTMRPTQKDSETVDEDEE) form a disordered region. Residue Lys-1030 forms a Glycyl lysine isopeptide (Lys-Gly) (interchain with G-Cter in SUMO1) linkage. S1 motif domains follow at residues 1036-1109 (GDMV…ISHP), 1149-1222 (GQTV…LSLT), 1230-1298 (GEVA…LSLR), and 1324-1396 (GQLL…LSFL). 2 positions are modified to phosphoserine: Ser-1360 and Ser-1362. Disordered stretches follow at residues 1395–1531 (FLPG…APRL) and 1549–1586 (ALPP…KAEK). A Glycyl lysine isopeptide (Lys-Gly) (interchain with G-Cter in SUMO2) cross-link involves residue Lys-1416. 2 stretches are compositionally biased toward basic and acidic residues: residues 1416-1459 (KQEE…EKQQ) and 1469-1484 (GGRE…ERVS). Phosphoserine occurs at positions 1476, 1493, and 1498. A compositionally biased stretch (basic and acidic residues) spans 1575–1586 (KERELEKQKAEK). HAT repeat units follow at residues 1599–1631 (GRQP…FHLQ), 1705–1737 (EKFQ…FLLR), 1775–1807 (GDAE…MTIK), and 1809–1844 (GSQK…YEKQ).

Interacts with NF-kappa-B p50/NFKB1 and NF-kappa-B p65/RELA.

It localises to the nucleus. The protein resides in the nucleolus. In terms of biological role, essential for the generation of mature 18S rRNA, specifically necessary for cleavages at sites A0, 1 and 2 of the 47S precursor. Directly interacts with U3 snoRNA. Involved in the biogenesis of rRNA. The polypeptide is Protein RRP5 homolog (PDCD11) (Homo sapiens (Human)).